The primary structure comprises 288 residues: ATP synthase gamma chain (288 aa).

Belongs to the ATPase gamma chain family. In terms of assembly, F-type ATPases have 2 components, CF(1) - the catalytic core - and CF(0) - the membrane proton channel. CF(1) has five subunits: alpha(3), beta(3), gamma(1), delta(1), epsilon(1). CF(0) has three main subunits: a, b and c.

Its subcellular location is the cell inner membrane. Functionally, produces ATP from ADP in the presence of a proton gradient across the membrane. The gamma chain is believed to be important in regulating ATPase activity and the flow of protons through the CF(0) complex. This chain is ATP synthase gamma chain, found in Legionella pneumophila (strain Corby).